The primary structure comprises 374 residues: Copper-containing nitrite reductase (374 aa).

Positions 1 to 31 (MFTRRAALVGAAALASAPLVIRTAGAEEAPA) form a signal peptide, tat-type signal. 2 Plastocyanin-like domains span residues 93–189 (MTFD…IMVL) and 254–355 (GAVG…VLVE). Cu cation-binding residues include His-126, His-131, His-166, Cys-167, His-177, Met-182, and His-338.

The protein belongs to the multicopper oxidase family. As to quaternary structure, homotrimer. It depends on Cu(2+) as a cofactor. Cu(+) is required as a cofactor. Requires FAD as cofactor. Predicted to be exported by the Tat system. The position of the signal peptide cleavage has not been experimentally proven.

It localises to the periplasm. The enzyme catalyses nitric oxide + Fe(III)-[cytochrome c] + H2O = Fe(II)-[cytochrome c] + nitrite + 2 H(+). It participates in nitrogen metabolism; nitrate reduction (denitrification); dinitrogen from nitrate: step 2/4. This chain is Copper-containing nitrite reductase (nirK), found in Cereibacter sphaeroides (strain ATCC 17025 / ATH 2.4.3) (Rhodobacter sphaeroides).